The following is a 389-amino-acid chain: Large envelope protein (389 aa).

An N-acetylmethionine modification is found at methionine 1. Glycine 2 carries the N-myristoyl glycine; by host lipid modification. Positions 2–108 are pre-S1; it reads GQNLSTSNPL…PPLRDTHPQA (107 aa). Positions 2–163 are pre-S; sequence GQNLSTSNPL…FSTTGDPAPN (162 aa). The Virion surface; in external conformation portion of the chain corresponds to 2–170; that stretch reads GQNLSTSNPL…APNMENITSG (169 aa). At 2-242 the chain is on the intravirion; in internal conformation side; sequence GQNLSTSNPL…PGYRWMCLRR (241 aa). The interval 75 to 107 is disordered; sequence TTLPANPPPASTNRQSGRQPTPLSPPLRDTHPQ. A compositionally biased stretch (polar residues) spans 85 to 95; that stretch reads STNRQSGRQPT. Positions 109 to 163 are pre-S2; that stretch reads MQWNSTTFHQALQDPRVRGLYFPAGGSSSGTLNPVPNTASHISSVFSTTGDPAPN. A helical transmembrane segment spans residues 171-191; it reads FLGPLLVLQAGFFLLTKILTI. The Intravirion; in external conformation segment spans residues 192 to 242; sequence PQSLDSWWTSLNFLGGAPVCLGQNSQSPTSNHSPTSCPPICPGYRWMCLRR. A helical membrane pass occupies residues 243 to 263; sequence FIIFLFILLLCLIFLLVLLDY. Residues 264–337 lie on the Virion surface side of the membrane; sequence QGMLPVCPLI…WASVRFSWLS (74 aa). Asparagine 309 carries an N-linked (GlcNAc...) asparagine; by host glycan. A helical membrane pass occupies residues 338–358; sequence LLAPFVQWFAGLSPTVWLLAI. The Intravirion portion of the chain corresponds to 359-364; the sequence is WMMWYW. The helical transmembrane segment at 365–387 threads the bilayer; it reads GPNLYNILSPFIPLLPIFFCLWV. Residues 388–389 are Virion surface-facing; sequence YI.

Belongs to the orthohepadnavirus major surface antigen family. In its internal form (Li-HBsAg), interacts with the capsid protein and with the isoform S. Interacts with host chaperone CANX. As to quaternary structure, associates with host chaperone CANX through its pre-S2 N glycan; this association may be essential for isoform M proper secretion. In terms of assembly, interacts with isoform L. Interacts with the antigens of satellite virus HDV (HDVAgs); this interaction is required for encapsidation of HDV genomic RNA. Post-translationally, isoform M is N-terminally acetylated by host at a ratio of 90%, and N-glycosylated by host at the pre-S2 region. In terms of processing, myristoylated.

The protein resides in the virion membrane. Functionally, the large envelope protein exists in two topological conformations, one which is termed 'external' or Le-HBsAg and the other 'internal' or Li-HBsAg. In its external conformation the protein attaches the virus to cell receptors and thereby initiating infection. This interaction determines the species specificity and liver tropism. This attachment induces virion internalization predominantly through caveolin-mediated endocytosis. The large envelope protein also assures fusion between virion membrane and endosomal membrane. In its internal conformation the protein plays a role in virion morphogenesis and mediates the contact with the nucleocapsid like a matrix protein. Its function is as follows. The middle envelope protein plays an important role in the budding of the virion. It is involved in the induction of budding in a nucleocapsid independent way. In this process the majority of envelope proteins bud to form subviral lipoprotein particles of 22 nm of diameter that do not contain a nucleocapsid. This chain is Large envelope protein, found in Pan troglodytes (Chimpanzee).